A 477-amino-acid chain; its full sequence is Transposase for insertion sequence element IS231F (477 aa).

The protein belongs to the transposase 11 family.

Involved in the transposition of the insertion sequence. This chain is Transposase for insertion sequence element IS231F, found in Bacillus thuringiensis subsp. israelensis.